Here is a 328-residue protein sequence, read N- to C-terminus: Small ribosomal subunit protein bS1A (328 aa).

S1 motif domains are found at residues 31–100, 118–182, and 196–264; these read GDIV…LSIR, DATV…LSHR, and AQVV…LSTK. The disordered stretch occupies residues 298-328; it reads EAQGIPYEPPTSVDDTDDEEDESLAVSAVDE. The segment covering 311–328 has biased composition (acidic residues); it reads DDTDDEEDESLAVSAVDE.

This sequence belongs to the bacterial ribosomal protein bS1 family.

Functionally, binds mRNA. This Synechocystis sp. (strain ATCC 27184 / PCC 6803 / Kazusa) protein is Small ribosomal subunit protein bS1A (rps1A).